The following is a 356-amino-acid chain: MEYRRVKDQESYDVVSQKDIESPGERSLSSTSATSSLSTAGASKGNNSWKLKSIVTLALTLLTSSQAILIVWSKRAGKYEYSVTTANFSVEALKCLLSLIALYRTWNSQGVTEDNRLSTSFDEVSVYPIPAILYMVKNLLQYYIFAYVDAPAYQILKNLNIISTGVLYRIILKKKLSEIQWAAFILLCAGCTTAQLNPSSDHVLQTPIQGWVMAIVMALLSGFAGVYTEAIIKKRPSRNINVQNFWLYIFGMLFNLVAICVQDFDAVMNKGFFHGYSFITVLMILNHALSGIAVSMVMKYADNIVKVYSTSVAMLLTAVVSVFLFGFHLSLAFFLGSTVVSVSVYLHSVGKPQPQK.

Over residues 1-24 the composition is skewed to basic and acidic residues; it reads MEYRRVKDQESYDVVSQKDIESPG. The disordered stretch occupies residues 1-43; that stretch reads MEYRRVKDQESYDVVSQKDIESPGERSLSSTSATSSLSTAGAS. At 1–52 the chain is on the cytoplasmic side; that stretch reads MEYRRVKDQESYDVVSQKDIESPGERSLSSTSATSSLSTAGASKGNNSWKLK. Positions 27-43 are enriched in low complexity; the sequence is SLSSTSATSSLSTAGAS. The chain crosses the membrane as a helical span at residues 53-73; the sequence is SIVTLALTLLTSSQAILIVWS. The Lumenal segment spans residues 74-82; the sequence is KRAGKYEYS. A helical transmembrane segment spans residues 83-103; sequence VTTANFSVEALKCLLSLIALY. The Cytoplasmic portion of the chain corresponds to 104 to 125; sequence RTWNSQGVTEDNRLSTSFDEVS. Residues 126-146 traverse the membrane as a helical segment; sequence VYPIPAILYMVKNLLQYYIFA. Residues 147-149 are Lumenal-facing; the sequence is YVD. A helical transmembrane segment spans residues 150-172; the sequence is APAYQILKNLNIISTGVLYRIIL. Topologically, residues 173–175 are cytoplasmic; it reads KKK. Residues 176-196 form a helical membrane-spanning segment; sequence LSEIQWAAFILLCAGCTTAQL. At 197–211 the chain is on the lumenal side; it reads NPSSDHVLQTPIQGW. A helical membrane pass occupies residues 212 to 232; sequence VMAIVMALLSGFAGVYTEAII. The Cytoplasmic portion of the chain corresponds to 233–239; it reads KKRPSRN. Residues 240–260 traverse the membrane as a helical segment; the sequence is INVQNFWLYIFGMLFNLVAIC. Over 261-277 the chain is Lumenal; sequence VQDFDAVMNKGFFHGYS. A helical membrane pass occupies residues 278–298; that stretch reads FITVLMILNHALSGIAVSMVM. Residues 299–314 are Cytoplasmic-facing; sequence KYADNIVKVYSTSVAM. A helical membrane pass occupies residues 315-335; the sequence is LLTAVVSVFLFGFHLSLAFFL. Residues 336-356 lie on the Lumenal side of the membrane; sequence GSTVVSVSVYLHSVGKPQPQK.

It belongs to the nucleotide-sugar transporter family. CMP-Sialate:CMP antiporter (TC 2.A.7.12) subfamily.

It is found in the golgi apparatus membrane. In terms of biological role, sugar transporter involved in the transport of CMP-sialic acid from the cytoplasm into the Golgi. May transport important nucleotide sugars such as CMP-Kdo (2-keto-3-deoxy-D-manno-octulosonic acid) in physiological conditions. The chain is CMP-sialic acid transporter 2 from Oryza sativa subsp. indica (Rice).